Reading from the N-terminus, the 829-residue chain is Spindle-defective protein 2 (829 aa).

Disordered stretches follow at residues 1–29 (MNEDAPMDLVDDRFADQSIQDEPVDDGES), 41–104 (EDED…SNDI), 183–294 (KKDV…TTSD), and 326–471 (RKKR…NGHM). The segment covering 54–82 (FRLENRYKPSLHTPRELPTIREENREDVR) has biased composition (basic and acidic residues). Residues 83–93 (SNTSSRVNTRP) show a composition bias toward polar residues. Basic and acidic residues predominate over residues 183–216 (KKDVTRKQENVRPGKMMPEKVNDENEPKSRRFSP). Polar residues-rich tracts occupy residues 217–230 (ERNTFTTSPMNSTK) and 266–294 (PQRTSGTPKTYESRHPTNAYTPNSATTSD). Residues 314–332 (VDINLLTALENARKKRDRP) are a coiled coil. Low complexity-rich tracts occupy residues 361–370 (SMTSIVSSST) and 384–408 (NSATSTDLTNSNTSNFTNNTSRVST). 2 stretches are compositionally biased toward polar residues: residues 409-439 (AKNDFSRSSRQRNGFSDSSVSTIIPNMNSMT) and 448-463 (SVSSVRTISRASSTMT).

The protein resides in the cytoplasm. It is found in the cytoskeleton. It localises to the microtubule organizing center. Its subcellular location is the centrosome. The protein localises to the centriole. Functionally, required both for centrosome duplication and maturation. Required for pericentriolar material (PCM) recruitment. This is Spindle-defective protein 2 from Caenorhabditis briggsae.